Here is a 632-residue protein sequence, read N- to C-terminus: Tetratricopeptide repeat protein 39B (632 aa).

3 TPR repeats span residues 343–376 (SLVL…QEEW), 535–568 (CLVK…EKLL), and 576–609 (PFTL…YKDY).

This sequence belongs to the TTC39 family.

Functionally, regulates high density lipoprotein (HDL) cholesterol metabolism by promoting the ubiquitination and degradation of the oxysterols receptors LXR (NR1H2 and NR1H3). The protein is Tetratricopeptide repeat protein 39B (TTC39B) of Macaca fascicularis (Crab-eating macaque).